The following is a 515-amino-acid chain: Hopanoid C-3 methylase (515 aa).

Residues 8–141 (PSPLMYTKVF…ETLARRGNID (134 aa)) form the B12-binding domain. Residues 181–395 (GTLDPCASIE…DIQHAVLPTR (215 aa)) enclose the Radical SAM core domain. [4Fe-4S] cluster is bound by residues Cys-195, Cys-199, and Cys-202.

This sequence belongs to the radical SAM superfamily. The cofactor is [4Fe-4S] cluster.

Required for methylation of hopanoids at the C-3 position. The protein is Hopanoid C-3 methylase of Methylococcus capsulatus (strain ATCC 33009 / NCIMB 11132 / Bath).